The sequence spans 896 residues: Isoleucine--tRNA ligase (896 aa).

The 'HIGH' region motif lies at 57 to 67 (PYANNNIHIGH). Glu-543 is a binding site for L-isoleucyl-5'-AMP. A 'KMSKS' region motif is present at residues 584–588 (KMSKS). Residue Lys-587 coordinates ATP. Cys-869, Cys-872, Cys-885, and Cys-888 together coordinate Zn(2+).

It belongs to the class-I aminoacyl-tRNA synthetase family. IleS type 1 subfamily. In terms of assembly, monomer. Zn(2+) is required as a cofactor.

The protein resides in the cytoplasm. The enzyme catalyses tRNA(Ile) + L-isoleucine + ATP = L-isoleucyl-tRNA(Ile) + AMP + diphosphate. Catalyzes the attachment of isoleucine to tRNA(Ile). As IleRS can inadvertently accommodate and process structurally similar amino acids such as valine, to avoid such errors it has two additional distinct tRNA(Ile)-dependent editing activities. One activity is designated as 'pretransfer' editing and involves the hydrolysis of activated Val-AMP. The other activity is designated 'posttransfer' editing and involves deacylation of mischarged Val-tRNA(Ile). This is Isoleucine--tRNA ligase from Acholeplasma laidlawii (strain PG-8A).